A 537-amino-acid chain; its full sequence is Carbamoyl phosphate synthase large chain, C-terminal section (537 aa).

Residues Met-1–Gly-395 form a carbamoyl phosphate synthetic domain region. The region spanning Arg-122–Ile-313 is the ATP-grasp domain. Residues Arg-158, Lys-197, Leu-199, Glu-204, Gly-229, Val-230, His-231, Ser-232, Gln-272, and Glu-284 each contribute to the ATP site. Mg(2+)-binding residues include Gln-272, Glu-284, and Asn-286. Residues Gln-272, Glu-284, and Asn-286 each coordinate Mn(2+). Residues Tyr-396–Ile-537 form the MGS-like domain. Positions Tyr-396–Ile-537 are allosteric domain.

It belongs to the CarB family. Composed of two chains; the small (or glutamine) chain promotes the hydrolysis of glutamine to ammonia, which is used by the large (or ammonia) chain to synthesize carbamoyl phosphate. Tetramer of heterodimers (alpha,beta)4. The cofactor is Mg(2+). Mn(2+) is required as a cofactor.

The enzyme catalyses hydrogencarbonate + L-glutamine + 2 ATP + H2O = carbamoyl phosphate + L-glutamate + 2 ADP + phosphate + 2 H(+). The catalysed reaction is hydrogencarbonate + NH4(+) + 2 ATP = carbamoyl phosphate + 2 ADP + phosphate + 2 H(+). The protein operates within amino-acid biosynthesis; L-arginine biosynthesis; carbamoyl phosphate from bicarbonate: step 1/1. It functions in the pathway pyrimidine metabolism; UMP biosynthesis via de novo pathway; (S)-dihydroorotate from bicarbonate: step 1/3. Its function is as follows. Large subunit of the glutamine-dependent carbamoyl phosphate synthetase (CPSase). CPSase catalyzes the formation of carbamoyl phosphate from the ammonia moiety of glutamine, carbonate, and phosphate donated by ATP, constituting the first step of 2 biosynthetic pathways, one leading to arginine and/or urea and the other to pyrimidine nucleotides. The large subunit (synthetase) binds the substrates ammonia (free or transferred from glutamine from the small subunit), hydrogencarbonate and ATP and carries out an ATP-coupled ligase reaction, activating hydrogencarbonate by forming carboxy phosphate which reacts with ammonia to form carbamoyl phosphate. The protein is Carbamoyl phosphate synthase large chain, C-terminal section (carB2) of Aquifex aeolicus (strain VF5).